The chain runs to 220 residues: Putative O-methyltransferase Mjls_4009 (220 aa).

Residues valine 47, glutamate 69, 71 to 72 (GT), serine 77, aspartate 95, and valine 96 each bind S-adenosyl-L-methionine. Residue aspartate 143 coordinates substrate. An S-adenosyl-L-methionine-binding site is contributed by aspartate 145.

The protein belongs to the class I-like SAM-binding methyltransferase superfamily. Cation-dependent O-methyltransferase family.

The polypeptide is Putative O-methyltransferase Mjls_4009 (Mycobacterium sp. (strain JLS)).